A 1142-amino-acid polypeptide reads, in one-letter code: Envelopment polyprotein (1142 aa).

Positions 1–21 (MSKFCLCLSLLGVLLLQVCDT) are cleaved as a signal peptide. Topologically, residues 22–489 (RSLLELKIEC…LCVPGIHGWS (468 aa)) are lumenal. 6 disulfide bridges follow: Cys-31-Cys-156, Cys-65-Cys-162, Cys-114-Cys-133, Cys-138-Cys-143, Cys-180-Cys-190, and Cys-215-Cys-253. Asn-139 is a glycosylation site (N-linked (GlcNAc...) asparagine; by host). The N-linked (GlcNAc...) asparagine; by host glycan is linked to Asn-353. 4 disulfides stabilise this stretch: Cys-382-Cys-441, Cys-386-Cys-395, Cys-411-Cys-430, and Cys-458-Cys-481. Residue Asn-405 is glycosylated (N-linked (GlcNAc...) asparagine; by host). A helical membrane pass occupies residues 490-510 (TIALLATFCFGWLLIPIISLV). The Cytoplasmic segment spans residues 511–633 (SIKIMLLFAY…LSVFRYRSRC (123 aa)). The tract at residues 522 to 539 (CSKYSNDSKFRLLIEKVK) is binding to the ribonucleoprotein. CCHC-type zinc fingers lie at residues 551-571 (CEVC…KKSC) and 576-597 (CPYC…FKVC). Binding to the ribonucleoprotein stretches follow at residues 594-611 (FKVC…RKSL), 598-609 (KLTTRFQENLRK), and 617-631 (KRGC…RYRS). An ITAM domain is found at 617–640 (KRGCYRTLSVFRYRSRCFVGLVWC). Residues 621–624 (YRTL) carry the YxxL motif. The helical transmembrane segment at 634–654 (FVGLVWCILLVLELVIWAASA) threads the bilayer. The Lumenal segment spans residues 655-1110 (DTVEIKTGWT…EWLMGILSGN (456 aa)). Disulfide bonds link Cys-741–Cys-776, Cys-745–Cys-783, Cys-757–Cys-890, Cys-771–Cys-901, Cys-786–Cys-909, Cys-812–Cys-821, Cys-829–Cys-838, and Cys-869–Cys-873. A fusion loop region spans residues 763–783 (YEFETGWGCNPGDCPGVGTGC). N-linked (GlcNAc...) asparagine; by host glycosylation occurs at Asn-933. 5 disulfide bridges follow: Cys-975–Cys-1005, Cys-998–Cys-1050, Cys-1015–Cys-1020, Cys-1051–Cys-1056, and Cys-1090–Cys-1094. A helical transmembrane segment spans residues 1111–1131 (WMVVAVLVVLLILSIFLFSLC). Residues 1127-1142 (LFSLCCPRRVVHKKSS) form a binding to the ribonucleoprotein region. Over 1132–1142 (CPRRVVHKKSS) the chain is Cytoplasmic.

It belongs to the hantavirus envelope glycoprotein family. Homodimer. Homotetramer; forms heterotetrameric Gn-Gc spikes in the pre-fusion conformation. Interacts (via C-terminus) with the nucleoprotein. Interacts with host TUFM; this interaction contributes to the virus-induced degradation of mitochondria by autophagy, which leads to degradation of host MAVS and inhibition of type I interferon (IFN) responses. Interacts with host MAP1LC3B; this interaction contributes to the virus-induced degradation of mitochondria by autophagy, which leads to degradation of host MAVS and inhibition of type I interferon (IFN) responses. As to quaternary structure, homodimer. Homotetramer; forms heterotetrameric Gn-Gc spikes in the pre-fusion conformation. Homotrimer; forms homotrimer in the post-fusion conformation at acidic pH. Interacts (via C-terminus) with the nucleoprotein. Post-translationally, envelope polyprotein precursor is quickly cleaved in vivo just after synthesis, presumably by host signal peptidase.

It is found in the virion membrane. The protein localises to the host cell surface. Its subcellular location is the host Golgi apparatus membrane. It localises to the host endoplasmic reticulum membrane. The protein resides in the host mitochondrion. In terms of biological role, forms homotetramers with glycoprotein C at the surface of the virion. Attaches the virion to host cell receptors including integrin alpha5/ITGB1. This attachment induces virion internalization predominantly through clathrin-dependent endocytosis. Mediates the assembly and budding of infectious virus particles through its interaction with the nucleocapsid protein and the viral genome. May dysregulate normal immune and endothelial cell responses through an ITAM motif. Translocates to mitochondria, binds to host TUFM and recruits MAP1LC3B. These interactions induce mitochondrial autophagy and therefore destruction of host MAVS leading to inhibition of type I interferon (IFN) responses. Concomitant breakdown of glycoprotein N is apparently prevented by the nucleoprotein that may inhibit Gn-stimulated autophagosome-lysosome fusion. Interacts with the viral genomic RNA. Forms homotetramers with glycoprotein N at the surface of the virion. Attaches the virion to host cell receptors including integrin ITGAV/ITGB3. This attachment induces virion internalization predominantly through clathrin-dependent endocytosis. Class II fusion protein that promotes fusion of viral membrane with host endosomal membrane after endocytosis of the virion. This Microtus pennsylvanicus (Meadow vole) protein is Envelopment polyprotein (GP).